A 693-amino-acid chain; its full sequence is Putative transmembrane protein ORF68 (693 aa).

Positions 1–17 are cleaved as a signal peptide; the sequence is MILTIILYTLLFSTCSA. At 18–666 the chain is on the extracellular side; sequence QSVHTMPEAV…WLTKFGTGGG (649 aa). Residues 208 to 256 adopt a coiled-coil conformation; that stretch reads SKAANNRMDALEDGMKNINTRVTETNLLLEKLSTEVTGALTQLENEIKM. The chain crosses the membrane as a helical span at residues 667–687; it reads IAGVTIGLLLPILAIVFSCYV. Residues 688–693 are Cytoplasmic-facing; sequence FCKRRV.

The protein localises to the host membrane. This Magallana gigas (Pacific oyster) protein is Putative transmembrane protein ORF68.